Here is a 350-residue protein sequence, read N- to C-terminus: D-alanine--D-alanine ligase (350 aa).

The ATP-grasp domain occupies 135–335 (KLYAKNLGVK…LAQSLPKTPK (201 aa)). Residue 164–219 (KPSFNFPFIVKPNNAGSSLGVSVVKEEKELAYALDGAFEYSKEVLIEPFIQRVKEY) coordinates ATP. Residues Asp291, Glu303, and Asn305 each coordinate Mg(2+).

This sequence belongs to the D-alanine--D-alanine ligase family. Mg(2+) is required as a cofactor. Requires Mn(2+) as cofactor.

The protein localises to the cytoplasm. It carries out the reaction 2 D-alanine + ATP = D-alanyl-D-alanine + ADP + phosphate + H(+). It participates in cell wall biogenesis; peptidoglycan biosynthesis. In terms of biological role, cell wall formation. In Helicobacter acinonychis (strain Sheeba), this protein is D-alanine--D-alanine ligase.